The chain runs to 1025 residues: Multidrug resistance protein MdtC (1025 aa).

A run of 12 helical transmembrane segments spans residues Leu16 to Pro36, Glu333 to Leu353, Leu360 to Cys380, Leu387 to Leu407, Val431 to Met451, Phe459 to Val479, Trp528 to Pro548, Leu853 to Ser873, Val875 to Leu895, Leu897 to Val917, Pro953 to Gly973, and Ile984 to Val1004.

It belongs to the resistance-nodulation-cell division (RND) (TC 2.A.6) family. MdtC subfamily. Part of a tripartite efflux system composed of MdtA, MdtB and MdtC. MdtC forms a heteromultimer with MdtB.

Its subcellular location is the cell inner membrane. In Pantoea ananatis (strain AJ13355), this protein is Multidrug resistance protein MdtC.